The primary structure comprises 88 residues: Phosphoribosyl-ATP pyrophosphatase (88 aa).

The protein belongs to the PRA-PH family.

It is found in the cytoplasm. It catalyses the reaction 1-(5-phospho-beta-D-ribosyl)-ATP + H2O = 1-(5-phospho-beta-D-ribosyl)-5'-AMP + diphosphate + H(+). The protein operates within amino-acid biosynthesis; L-histidine biosynthesis; L-histidine from 5-phospho-alpha-D-ribose 1-diphosphate: step 2/9. In Cutibacterium acnes (strain DSM 16379 / KPA171202) (Propionibacterium acnes), this protein is Phosphoribosyl-ATP pyrophosphatase.